A 68-amino-acid polypeptide reads, in one-letter code: Small cysteine-rich protein 5 (68 aa).

Positions 1–24 (MAVKFHLCLLLIILVGMGAHVAFA) are cleaved as a signal peptide.

The protein belongs to the Cnidaria small cysteine-rich protein (SCRiP) family. gamma subfamily. Post-translationally, contains 4 disulfide bonds.

It localises to the secreted. Its subcellular location is the nematocyst. Its function is as follows. Induces neurotoxic symptoms on zebrafish. Has also been claimed to be implied in calcification, but tests on homolog proteins suggest that proteins of this family have a neurotoxic function and not a calcification function. The protein is Small cysteine-rich protein 5 of Orbicella faveolata (Mountainous star coral).